Consider the following 412-residue polypeptide: Histidinol dehydrogenase (412 aa).

Residues Tyr-118, Gln-176, and Asn-199 each contribute to the NAD(+) site. Substrate-binding residues include Thr-222, Gln-244, and His-247. The Zn(2+) site is built by Gln-244 and His-247. Residues Glu-311 and His-312 each act as proton acceptor in the active site. Residues His-312, Asp-345, Glu-399, and His-404 each contribute to the substrate site. Asp-345 serves as a coordination point for Zn(2+). His-404 is a Zn(2+) binding site.

Belongs to the histidinol dehydrogenase family. Zn(2+) serves as cofactor.

The enzyme catalyses L-histidinol + 2 NAD(+) + H2O = L-histidine + 2 NADH + 3 H(+). It functions in the pathway amino-acid biosynthesis; L-histidine biosynthesis; L-histidine from 5-phospho-alpha-D-ribose 1-diphosphate: step 9/9. In terms of biological role, catalyzes the sequential NAD-dependent oxidations of L-histidinol to L-histidinaldehyde and then to L-histidine. This Thermus thermophilus (strain ATCC BAA-163 / DSM 7039 / HB27) protein is Histidinol dehydrogenase.